The sequence spans 130 residues: Small ribosomal subunit protein uS8 (130 aa).

Belongs to the universal ribosomal protein uS8 family. In terms of assembly, part of the 30S ribosomal subunit. Contacts proteins S5 and S12.

In terms of biological role, one of the primary rRNA binding proteins, it binds directly to 16S rRNA central domain where it helps coordinate assembly of the platform of the 30S subunit. This Aster yellows witches'-broom phytoplasma (strain AYWB) protein is Small ribosomal subunit protein uS8.